The primary structure comprises 417 residues: Lissencephaly-1 homolog (417 aa).

The LisH domain maps to 7 to 39; it reads QKEELNGAILDYFDSSGYKLTSTEFTKETNIEL. Residues 52–80 are a coiled coil; the sequence is TSVIRLQKKVMDLEAKVSQLEEELNNGGR. The tract at residues 72-93 is disordered; the sequence is EEELNNGGRGPARRGKEDALPR. WD repeat units lie at residues 102–143, 144–185, 186–225, 228–267, 270–339, 342–383, and 385–417; these read GHRN…RTLK, GHTN…KTLH, GHDH…CTKT, GHED…CLLT, EHSH…CLQT, GHDN…KTIN, and AHSH…WKLG.

This sequence belongs to the WD repeat LIS1/nudF family.

Its subcellular location is the cytoplasm. The protein localises to the cytoskeleton. It localises to the microtubule organizing center. It is found in the centrosome. Functionally, positively regulates the activity of the minus-end directed microtubule motor protein dynein. May enhance dynein-mediated microtubule sliding by targeting dynein to the microtubule plus end. Required for several dynein- and microtubule-dependent processes. This Heterostelium pallidum (strain ATCC 26659 / Pp 5 / PN500) (Cellular slime mold) protein is Lissencephaly-1 homolog.